Reading from the N-terminus, the 150-residue chain is Peptidoglycan-associated lipoprotein (150 aa).

The N-terminal stretch at 1–19 is a signal peptide; the sequence is MKKLTKVLLVAGSVAVLAA. Cys-20 carries the N-palmitoyl cysteine lipid modification. Residue Cys-20 is the site of S-diacylglycerol cysteine attachment. The 114-residue stretch at 37-150 folds into the OmpA-like domain; that stretch reads SVQDLQQRYN…SKNRRAVLAY (114 aa).

It belongs to the Pal lipoprotein family. As to quaternary structure, the Tol-Pal system is composed of five core proteins: the inner membrane proteins TolA, TolQ and TolR, the periplasmic protein TolB and the outer membrane protein Pal. They form a network linking the inner and outer membranes and the peptidoglycan layer.

It is found in the cell outer membrane. Functionally, part of the Tol-Pal system, which plays a role in outer membrane invagination during cell division and is important for maintaining outer membrane integrity. In Pasteurella multocida (strain Pm70), this protein is Peptidoglycan-associated lipoprotein.